We begin with the raw amino-acid sequence, 433 residues long: Serine hydroxymethyltransferase (433 aa).

121–123 (AHV) serves as a coordination point for (6S)-5,6,7,8-tetrahydrofolate. N6-(pyridoxal phosphate)lysine is present on Lys-227. Glu-243 contributes to the (6S)-5,6,7,8-tetrahydrofolate binding site.

The protein belongs to the SHMT family. As to quaternary structure, homodimer. Pyridoxal 5'-phosphate serves as cofactor.

The protein localises to the cytoplasm. The catalysed reaction is 5,10-methylenetetrahydrosulfopterin + glycine + H2O = tetrahydrosulfopterin + L-serine. The protein operates within amino-acid biosynthesis; glycine biosynthesis; glycine from L-serine: step 1/1. Its activity is regulated as follows. Is completely inhibited by addition of NaCNBH(3) in vitro; this reagent is a known inhibitor of PLP enzymes, that reduces the internal aldimine of PLP to the catalytically inactive and stable secondary amine. Is also inhibited by L-cysteine, which forms a thiazolidine complex with the active site PLP. In terms of biological role, catalyzes the reversible interconversion of serine and glycine with the modified folate sulfopterin serving as the one-carbon carrier. Cannot use tetrahydrofolate (THF or H4PteGlu) as the pteridine substrate. Also exhibits a pteridine-independent aldolase activity toward beta-hydroxyamino acids, producing glycine and aldehydes, via a retro-aldol mechanism. Thus, is able to catalyze the cleavage of both allo-threonine and beta-phenylserine. In Saccharolobus solfataricus (strain ATCC 35092 / DSM 1617 / JCM 11322 / P2) (Sulfolobus solfataricus), this protein is Serine hydroxymethyltransferase.